Consider the following 147-residue polypeptide: MGLQGQLSDVSSDSIPLMLLALLATFFRHVRSLLLFPSSAPVVVVTSNLSVLADQLNLNRLFSYRYSDNAASDCIVCLSKLKTGEEVRKLDCRHVFHKQCLEGWLQHLNFNCPLCRSPLLPHHHQGHGSDASISAFPLRSTSTASSH.

The segment at 74 to 116 adopts an RING-type; atypical zinc-finger fold; the sequence is CIVCLSKLKTGEEVRKLDCRHVFHKQCLEGWLQHLNFNCPLCR.

Interacts with NAC19. Expressed in vascular tissue, root tips, embryos and pistils.

The protein localises to the cytoplasm. It is found in the nucleus. It catalyses the reaction S-ubiquitinyl-[E2 ubiquitin-conjugating enzyme]-L-cysteine + [acceptor protein]-L-lysine = [E2 ubiquitin-conjugating enzyme]-L-cysteine + N(6)-ubiquitinyl-[acceptor protein]-L-lysine.. Its pathway is protein modification; protein ubiquitination. Its function is as follows. E3 ubiquitin-protein ligase involved in the positive regulation of abscisic acid (ABA) signaling and responses to salt and osmotic stresses during seed germination and early seedling development. Acts additively with RHA2A in regulating ABA signaling and drought response. Possesses E3 ubiquitin ligase activity in vitro. The polypeptide is E3 ubiquitin-protein ligase RHA2B (Arabidopsis thaliana (Mouse-ear cress)).